A 517-amino-acid polypeptide reads, in one-letter code: Keratin-associated protein 16-1 (517 aa).

11 consecutive repeat copies span residues 73 to 77 (CCDPV), 93 to 97 (CCEAT), 128 to 132 (CCQPV), 153 to 157 (CCEPA), 168 to 172 (CCQPV), 198 to 202 (CCQPV), 208 to 212 (CCSAV), 228 to 232 (CCQPV), 248 to 252 (CCDPS), 283 to 287 (CCVQS), and 303 to 307 (CCVSS). The 11 X 5 AA repeats of C-C-X(3) stretch occupies residues 73–307 (CCDPVICEPS…CQEPSCCVSS (235 aa)). Residues 483–517 (VSEEAPCQPTEAKPISPTTREAAAAQPAASKPANC) form a disordered region. Positions 504 to 517 (AAAAQPAASKPANC) are enriched in low complexity.

It belongs to the KRTAP type 16 family.

The sequence is that of Keratin-associated protein 16-1 (KRTAP16-1) from Homo sapiens (Human).